A 375-amino-acid chain; its full sequence is 23S rRNA (uracil(747)-C(5))-methyltransferase RlmC (375 aa).

The [4Fe-4S] cluster site is built by Cys-3, Cys-11, Cys-14, and Cys-87. The S-adenosyl-L-methionine site is built by Gln-212, Phe-241, Glu-262, and Asn-307. Cys-334 serves as the catalytic Nucleophile.

The protein belongs to the class I-like SAM-binding methyltransferase superfamily. RNA M5U methyltransferase family. RlmC subfamily.

The catalysed reaction is uridine(747) in 23S rRNA + S-adenosyl-L-methionine = 5-methyluridine(747) in 23S rRNA + S-adenosyl-L-homocysteine + H(+). Catalyzes the formation of 5-methyl-uridine at position 747 (m5U747) in 23S rRNA. The protein is 23S rRNA (uracil(747)-C(5))-methyltransferase RlmC of Escherichia fergusonii (strain ATCC 35469 / DSM 13698 / CCUG 18766 / IAM 14443 / JCM 21226 / LMG 7866 / NBRC 102419 / NCTC 12128 / CDC 0568-73).